Consider the following 266-residue polypeptide: Proteasome subunit alpha type-1 (266 aa).

It belongs to the peptidase T1A family. The 26S proteasome consists of a 20S proteasome core and two 19S regulatory subunits. The 20S proteasome core is composed of 28 subunits that are arranged in four stacked rings, resulting in a barrel-shaped structure. The two end rings are each formed by seven alpha subunits, and the two central rings are each formed by seven beta subunits. The catalytic chamber with the active sites is on the inside of the barrel.

The protein localises to the cytoplasm. It localises to the nucleus. The proteasome is a multicatalytic proteinase complex which is characterized by its ability to cleave peptides with Arg, Phe, Tyr, Leu, and Glu adjacent to the leaving group at neutral or slightly basic pH. The proteasome has an ATP-dependent proteolytic activity. The sequence is that of Proteasome subunit alpha type-1 from Trypanosoma brucei brucei.